The sequence spans 328 residues: MSAVAPEGRPLLRLEARNAQTPIERKPPWIRTRMRTGPEYSDVKGLVRAAGLHTVCEEAGCPNIYECWEDREATFLIGGDVCTRRCDFCQIDSGRPTPLDRDEPRRVAESVRTMGLRYATVTGVARDDLADGGSWLYGETVRQIHALSAGTGVEVLIPDFGGRADQLDEVFGAAPEVLAHNLETVPRIFKRIRPAFRYERSLDVLRQARAAGLVTKSNLILGLGETAEEIHAAMRDLHAAGCELLTVTQYLRPTPRHHPVERWVRPEEFLDWERVGAELGFSGVMSGPLVRSSYRAGRLYQQAITARGEGHTAASDLPKSVLETSHTQ.

The [4Fe-4S] cluster site is built by Cys-56, Cys-61, Cys-67, Cys-82, Cys-86, Cys-89, and Ser-293. The 215-residue stretch at 68–282 (WEDREATFLI…ERVGAELGFS (215 aa)) folds into the Radical SAM core domain.

It belongs to the radical SAM superfamily. Lipoyl synthase family. Requires [4Fe-4S] cluster as cofactor.

It localises to the cytoplasm. It catalyses the reaction [[Fe-S] cluster scaffold protein carrying a second [4Fe-4S](2+) cluster] + N(6)-octanoyl-L-lysyl-[protein] + 2 oxidized [2Fe-2S]-[ferredoxin] + 2 S-adenosyl-L-methionine + 4 H(+) = [[Fe-S] cluster scaffold protein] + N(6)-[(R)-dihydrolipoyl]-L-lysyl-[protein] + 4 Fe(3+) + 2 hydrogen sulfide + 2 5'-deoxyadenosine + 2 L-methionine + 2 reduced [2Fe-2S]-[ferredoxin]. The protein operates within protein modification; protein lipoylation via endogenous pathway; protein N(6)-(lipoyl)lysine from octanoyl-[acyl-carrier-protein]: step 2/2. Functionally, catalyzes the radical-mediated insertion of two sulfur atoms into the C-6 and C-8 positions of the octanoyl moiety bound to the lipoyl domains of lipoate-dependent enzymes, thereby converting the octanoylated domains into lipoylated derivatives. In Frankia alni (strain DSM 45986 / CECT 9034 / ACN14a), this protein is Lipoyl synthase.